The following is a 442-amino-acid chain: Exodeoxyribonuclease 7 large subunit (442 aa).

It belongs to the XseA family. As to quaternary structure, heterooligomer composed of large and small subunits.

The protein resides in the cytoplasm. It carries out the reaction Exonucleolytic cleavage in either 5'- to 3'- or 3'- to 5'-direction to yield nucleoside 5'-phosphates.. Its function is as follows. Bidirectionally degrades single-stranded DNA into large acid-insoluble oligonucleotides, which are then degraded further into small acid-soluble oligonucleotides. This chain is Exodeoxyribonuclease 7 large subunit, found in Shewanella woodyi (strain ATCC 51908 / MS32).